The following is a 169-amino-acid chain: MAQHEVNYLKSGGLPVVLTTVDHLVNWGRSNSLWALTYGLACCAIEMMASGAGRYDFDRFGTIFRASPRQADVMIVAGTLTKKHAEFIRRLYDQMSEPKWVISMGSCANTGGMFNTYATVQGCDRIIPVDVYLPGCAPRPETLQYAVMVLQQKIRREKASRKLPPKRLV.

4 residues coordinate [4Fe-4S] cluster: cysteine 42, cysteine 43, cysteine 107, and cysteine 136.

The protein belongs to the complex I 20 kDa subunit family. In terms of assembly, NDH-1 is composed of 14 different subunits. Subunits NuoB, C, D, E, F, and G constitute the peripheral sector of the complex. [4Fe-4S] cluster serves as cofactor.

Its subcellular location is the cell inner membrane. The catalysed reaction is a quinone + NADH + 5 H(+)(in) = a quinol + NAD(+) + 4 H(+)(out). NDH-1 shuttles electrons from NADH, via FMN and iron-sulfur (Fe-S) centers, to quinones in the respiratory chain. The immediate electron acceptor for the enzyme in this species is believed to be ubiquinone. Couples the redox reaction to proton translocation (for every two electrons transferred, four hydrogen ions are translocated across the cytoplasmic membrane), and thus conserves the redox energy in a proton gradient. This chain is NADH-quinone oxidoreductase subunit B, found in Wolinella succinogenes (strain ATCC 29543 / DSM 1740 / CCUG 13145 / JCM 31913 / LMG 7466 / NCTC 11488 / FDC 602W) (Vibrio succinogenes).